The chain runs to 154 residues: Lipoprotein signal peptidase (154 aa).

The next 2 helical transmembrane spans lie at 52 to 72 (ILAGQMWFFYLITTAVIIGIV) and 85 to 105 (LGVALGLMLGGAIGNFIDRAV). Residues Asp111 and Asp129 contribute to the active site. Residues 124–144 (IFNIADSSLCVGVMLLFIQML) form a helical membrane-spanning segment.

The protein belongs to the peptidase A8 family.

The protein localises to the cell membrane. The catalysed reaction is Release of signal peptides from bacterial membrane prolipoproteins. Hydrolyzes -Xaa-Yaa-Zaa-|-(S,diacylglyceryl)Cys-, in which Xaa is hydrophobic (preferably Leu), and Yaa (Ala or Ser) and Zaa (Gly or Ala) have small, neutral side chains.. It functions in the pathway protein modification; lipoprotein biosynthesis (signal peptide cleavage). Functionally, this protein specifically catalyzes the removal of signal peptides from prolipoproteins. This Bacillus subtilis (strain 168) protein is Lipoprotein signal peptidase.